We begin with the raw amino-acid sequence, 536 residues long: ATPase expression protein 3 (536 aa).

PPR repeat units follow at residues 212 to 246 (TTTMFNDLIYYFGKKSDYASCREYYSQMKLEKKTP) and 386 to 421 (TTGSVNILLNAAAEKGRLDLAVLTYNSMKVQLGVTP).

It is found in the mitochondrion inner membrane. In terms of biological role, required for respiration. The chain is ATPase expression protein 3 (AEP3) from Eremothecium gossypii (strain ATCC 10895 / CBS 109.51 / FGSC 9923 / NRRL Y-1056) (Yeast).